The chain runs to 879 residues: Alanine--tRNA ligase (879 aa).

Zn(2+)-binding residues include His566, His570, Cys668, and His672.

The protein belongs to the class-II aminoacyl-tRNA synthetase family. It depends on Zn(2+) as a cofactor.

It localises to the cytoplasm. It catalyses the reaction tRNA(Ala) + L-alanine + ATP = L-alanyl-tRNA(Ala) + AMP + diphosphate. Its function is as follows. Catalyzes the attachment of alanine to tRNA(Ala) in a two-step reaction: alanine is first activated by ATP to form Ala-AMP and then transferred to the acceptor end of tRNA(Ala). Also edits incorrectly charged Ser-tRNA(Ala) and Gly-tRNA(Ala) via its editing domain. The polypeptide is Alanine--tRNA ligase (Listeria monocytogenes serotype 4b (strain F2365)).